The primary structure comprises 177 residues: Large ribosomal subunit protein uL6 (177 aa).

Belongs to the universal ribosomal protein uL6 family. In terms of assembly, part of the 50S ribosomal subunit.

Its function is as follows. This protein binds to the 23S rRNA, and is important in its secondary structure. It is located near the subunit interface in the base of the L7/L12 stalk, and near the tRNA binding site of the peptidyltransferase center. This is Large ribosomal subunit protein uL6 from Rickettsia felis (strain ATCC VR-1525 / URRWXCal2) (Rickettsia azadi).